We begin with the raw amino-acid sequence, 746 residues long: MEISALLTSAGINISICIVLLSLYSILRKQPANYCVYFGRRLVCGGARRYDPFWYERFVPSPSWLVKAWETSEDELLAAAGLDAVVFLRMVIFSIRIFFIVAVICIAFVLPVNYYGQPMVHKEIHLESSEVFTIENLKEGSKWLWVHCLALYIITSAACLLLYFEYSTIAKMRLGHITGCASKPSQFTVLIRAIPWSPEQSYSDTLSKFFTNYYSSSYVSHQMVYHNGIIQRLLRDAERMCQTLKHVSPEINCKPSLRPCTFCGGPTATSSFHILSNEADSVKGMELGELTMTTTTTEQERSAAFVFFKTRYDALVVSEVLQSSNPMLWVTDLAPEPHDVYWKNLNIPYRQLWIRKIATLVGAVAFMFVFLIPVTFIQGLTQLVQLSHAFPFLRGILSKNFINQVITGYLPSVILILFFYAVPPLMMYFSALEGCISRSIRKKSACIKVLYFTIWNVFFVNILSGSVIRQLNVFSSVRDIPAQLARAVPTQAGFFMTYCFTSGWASLACEIMQPMALIWNLVAKVVTKNEDESYETLRFPYHTEIPRLLLFGLLGFTNSVIAPLILPFLLIYFFLAYLIYKNQILNVYITKYESGGQYWPIFHNTTIFSLILTQIIALGFFGLKLSTVASGFTIPLILLTLLFSEYCRQRFAPIFNKNPAQVLIDMDRADEISGKMEELHKKLHNVYSQIPLHSQKSSSKAECSNPFKKQELPDPEKLKPEEGDAIAKELWGFQGNESGQEHDTKS.

Helical transmembrane passes span 3–23 (ISALLTSAGINISICIVLLSL), 90–110 (MVIFSIRIFFIVAVICIAFVL), 144–164 (LWVHCLALYIITSAACLLLYF), 357–377 (IATLVGAVAFMFVFLIPVTFI), 405–425 (VITGYLPSVILILFFYAVPPL), 445–465 (ACIKVLYFTIWNVFFVNILSG), 492–512 (AGFFMTYCFTSGWASLACEIM), 560–580 (VIAPLILPFLLIYFFLAYLIY), 601–621 (IFHNTTIFSLILTQIIALGFF), and 623–643 (LKLSTVASGFTIPLILLTLLF). Residues 692-702 (LHSQKSSSKAE) show a composition bias toward polar residues. Residues 692–723 (LHSQKSSSKAECSNPFKKQELPDPEKLKPEEG) form a disordered region. The segment covering 708–723 (KKQELPDPEKLKPEEG) has biased composition (basic and acidic residues).

The protein belongs to the CSC1 (TC 1.A.17) family.

The protein resides in the membrane. Functionally, acts as an osmosensitive calcium-permeable cation channel. The sequence is that of Hyperosmolality-gated Ca2+ permeable channel 2.1 from Arabidopsis thaliana (Mouse-ear cress).